The primary structure comprises 89 residues: Small ribosomal subunit protein uS15 (89 aa).

The protein belongs to the universal ribosomal protein uS15 family. As to quaternary structure, part of the 30S ribosomal subunit. Forms a bridge to the 50S subunit in the 70S ribosome, contacting the 23S rRNA.

Its function is as follows. One of the primary rRNA binding proteins, it binds directly to 16S rRNA where it helps nucleate assembly of the platform of the 30S subunit by binding and bridging several RNA helices of the 16S rRNA. Forms an intersubunit bridge (bridge B4) with the 23S rRNA of the 50S subunit in the ribosome. The protein is Small ribosomal subunit protein uS15 of Roseiflexus sp. (strain RS-1).